A 923-amino-acid polypeptide reads, in one-letter code: Calmodulin-binding transcription activator 5 (923 aa).

The segment at residues 25–151 is a DNA-binding region (CG-1); that stretch reads IQTMLDEAYS…YRETHEVHAA (127 aa). The interval 272–372 is transcription activation; it reads VYQNNNSCGA…HSHSDIPEQV (101 aa). Residues 611–640 form an ANK repeat; that stretch reads QGWTALHWAAYYGREKMVAALLSAGARPNL. 3 consecutive IQ domains span residues 757–786, 799–828, and 875–904; these read NIIA…IQYR, MRKK…SVGV, and LERS…AHEE. The interval 824–846 is calmodulin-binding; sequence WSVGVLEKAILRWRLKRKGFRGL. Residues 887–914 are a coiled coil; that stretch reads RSKKAQQDYRRMKLAHEEAQLEYDGMQE.

This sequence belongs to the CAMTA family. Expressed in roots, stems, leaves, pollen, top of sepals and siliques.

The protein localises to the nucleus. Functionally, transcription activator. Binds to the DNA consensus sequence 5'-[ACG]CGCG[GTC]-3'. Regulates transcriptional activity in response to calcium signals. Binds calmodulin in a calcium-dependent manner. Involved in response to cold. Contributes together with CAMTA3 to the positive regulation of the cold-induced expression of DREB1A/CBF3, DREB1B/CBF1 and DREB1C/CBF2. The sequence is that of Calmodulin-binding transcription activator 5 from Arabidopsis thaliana (Mouse-ear cress).